A 367-amino-acid chain; its full sequence is Flagellar P-ring protein (367 aa).

The first 18 residues, 1 to 18 (MFRALITALFCFSGLALA), serve as a signal peptide directing secretion.

This sequence belongs to the FlgI family. In terms of assembly, the basal body constitutes a major portion of the flagellar organelle and consists of four rings (L,P,S, and M) mounted on a central rod.

The protein resides in the periplasm. It is found in the bacterial flagellum basal body. Assembles around the rod to form the L-ring and probably protects the motor/basal body from shearing forces during rotation. This Rhizorhabdus wittichii (strain DSM 6014 / CCUG 31198 / JCM 15750 / NBRC 105917 / EY 4224 / RW1) (Sphingomonas wittichii) protein is Flagellar P-ring protein.